We begin with the raw amino-acid sequence, 385 residues long: MLTRADLEAREAATLAPYATLSAQSRGREYPEAESATRTAFQKDRDRILHTTAFRRLEYKTQVFVNAQGDHYRTRLTHTLEVGQVARSVALTLGLNETLAEAIALAHDLGHPPFGHAGERVLDTLMAEYGVPPENTFDHNTQARRIVTRLEDRYPDFPGLNLTLETLDGLNKHDRAGLGPPSLEAQLVDAADALAYTAHDLDDGLRSGLLTPQQLETLPLWRELLARVPVQSPQLTERDRRTLHRELLGWLIEDLTTASEAAIRARGVTSAAEVRALPERLITYSAPMRELLHETGLFLREHLYRHWRVEMQVEQAARLLQTLFTAYLARPSMLPPQVRAQAELDGLPRAICDFMAGMTDRYATEMYAALVPTSGPVSWLGELRN.

In terms of domain architecture, HD spans Arg75–Thr197.

It belongs to the dGTPase family. Type 2 subfamily.

In Deinococcus geothermalis (strain DSM 11300 / CIP 105573 / AG-3a), this protein is Deoxyguanosinetriphosphate triphosphohydrolase-like protein.